The following is a 185-amino-acid chain: Elongation factor P (185 aa).

It belongs to the elongation factor P family.

The protein localises to the cytoplasm. Its pathway is protein biosynthesis; polypeptide chain elongation. Functionally, involved in peptide bond synthesis. Stimulates efficient translation and peptide-bond synthesis on native or reconstituted 70S ribosomes in vitro. Probably functions indirectly by altering the affinity of the ribosome for aminoacyl-tRNA, thus increasing their reactivity as acceptors for peptidyl transferase. The chain is Elongation factor P from Deinococcus radiodurans (strain ATCC 13939 / DSM 20539 / JCM 16871 / CCUG 27074 / LMG 4051 / NBRC 15346 / NCIMB 9279 / VKM B-1422 / R1).